The chain runs to 146 residues: Large ribosomal subunit protein uL13 (146 aa).

Belongs to the universal ribosomal protein uL13 family. In terms of assembly, part of the 50S ribosomal subunit.

In terms of biological role, this protein is one of the early assembly proteins of the 50S ribosomal subunit, although it is not seen to bind rRNA by itself. It is important during the early stages of 50S assembly. In Mycoplasma genitalium (strain ATCC 33530 / DSM 19775 / NCTC 10195 / G37) (Mycoplasmoides genitalium), this protein is Large ribosomal subunit protein uL13.